The sequence spans 172 residues: Adenylate kinase isoenzyme 6 (172 aa).

ATP contacts are provided by glycine 13, glycine 15, lysine 16, threonine 17, and threonine 18. The segment at 33-56 (NVGDLAREGELYDGFDEEYNCPIL) is NMPbind. The segment at 108-118 (TRGYSEKKLND) is LID. Residues arginine 109 and lysine 148 each contribute to the ATP site.

Belongs to the adenylate kinase family. AK6 subfamily. In terms of assembly, monomer and homodimer. Interacts with small ribosomal subunit protein uS11. Not a structural component of 43S pre-ribosomes, but transiently interacts with them by binding to uS11. Interacts with COIL (via C-terminus).

It is found in the cytoplasm. The protein resides in the nucleus. It localises to the nucleoplasm. The protein localises to the cajal body. The enzyme catalyses AMP + ATP = 2 ADP. It catalyses the reaction ATP + H2O = ADP + phosphate + H(+). Its function is as follows. Broad-specificity nucleoside monophosphate (NMP) kinase that catalyzes the reversible transfer of the terminal phosphate group between nucleoside triphosphates and monophosphates. Also has ATPase activity. Involved in the late cytoplasmic maturation steps of the 40S ribosomal particles, specifically 18S rRNA maturation. While NMP activity is not required for ribosome maturation, ATPase activity is. Associates transiently with small ribosomal subunit protein uS11. ATP hydrolysis breaks the interaction with uS11. May temporarily remove uS11 from the ribosome to enable a conformational change of the ribosomal RNA that is needed for the final maturation step of the small ribosomal subunit. Its NMP activity may have a role in nuclear energy homeostasis. May be involved in regulation of Cajal body (CB) formation. The chain is Adenylate kinase isoenzyme 6 from Oryctolagus cuniculus (Rabbit).